Reading from the N-terminus, the 605-residue chain is Beta-conglycinin alpha subunit 1 (605 aa).

An N-terminal signal peptide occupies residues 1-22 (MMRARFPLLLLGLVFLASVSVS). Positions 23 to 62 (FGIAYWEKENPKHNKCLQSCNSERDSYRNQACHARCNLLK) are excised as a propeptide. The interval 65 to 195 (KEECEEGEIP…ELRRHKNKNP (131 aa)) is disordered. Over residues 111–136 (PRQEEEHEQREEQEWPRKEEKRGEKG) the composition is skewed to basic and acidic residues. Acidic residues-rich tracts occupy residues 137–149 (SEEE…EEQD) and 169–184 (EDED…ESED). Cupin type-1 domains follow at residues 196–354 (FLFG…EEIN) and 406–567 (FNLR…QAVE). N261 and N517 each carry an N-linked (GlcNAc...) asparagine glycan.

Belongs to the 7S seed storage protein family. As to quaternary structure, the alpha-, alpha'-, and beta-subunits associate in various combinations to form trimeric proteins.

The protein resides in the vacuole. Its subcellular location is the aleurone grain. The protein localises to the endoplasmic reticulum. It is found in the protein storage vacuole. Seed storage protein. Accumulates during seed development and is hydrolyzed after germination to provide a carbon and nitrogen source for the developing seedling. The sequence is that of Beta-conglycinin alpha subunit 1 from Glycine max (Soybean).